We begin with the raw amino-acid sequence, 509 residues long: uncharacterized protein (509 aa).

The signal sequence occupies residues 1–32 (MMLPKRNIIHFLRKRAIFIVAAFIALLTVDYS).

The protein resides in the endoplasmic reticulum. This is an uncharacterized protein from Schizosaccharomyces pombe (strain 972 / ATCC 24843) (Fission yeast).